We begin with the raw amino-acid sequence, 412 residues long: Peptidase T (412 aa).

Zn(2+) is bound at residue histidine 83. Residue aspartate 85 is part of the active site. A Zn(2+)-binding site is contributed by aspartate 145. Glutamate 179 serves as the catalytic Proton acceptor. 3 residues coordinate Zn(2+): glutamate 180, aspartate 202, and histidine 384.

The protein belongs to the peptidase M20B family. Requires Zn(2+) as cofactor.

The protein localises to the cytoplasm. It carries out the reaction Release of the N-terminal residue from a tripeptide.. Cleaves the N-terminal amino acid of tripeptides. This chain is Peptidase T, found in Fusobacterium nucleatum subsp. nucleatum (strain ATCC 25586 / DSM 15643 / BCRC 10681 / CIP 101130 / JCM 8532 / KCTC 2640 / LMG 13131 / VPI 4355).